An 865-amino-acid polypeptide reads, in one-letter code: DNA mismatch repair protein MutS (865 aa).

Glycine 609–serine 616 is a binding site for ATP.

The protein belongs to the DNA mismatch repair MutS family.

Functionally, this protein is involved in the repair of mismatches in DNA. It is possible that it carries out the mismatch recognition step. This protein has a weak ATPase activity. The protein is DNA mismatch repair protein MutS of Leuconostoc citreum (strain KM20).